Reading from the N-terminus, the 363-residue chain is Ethanol acetyltransferase 1 (363 aa).

A mitochondrion-targeting transit peptide spans 1-19 (MLLAYTVRPSNWSFTRRAY). Residues 65–164 (PIIFYHGLLG…FSAACIIDNS (100 aa)) form the AB hydrolase-1 domain. Active-site charge relay system residues include Ser138, Asp162, and His313.

The protein belongs to the AB hydrolase superfamily.

Its subcellular location is the mitochondrion. It carries out the reaction ethanol + acetyl-CoA = ethyl acetate + CoA. The catalysed reaction is acetyl-CoA + H2O = acetate + CoA + H(+). It catalyses the reaction ethyl acetate + H2O = ethanol + acetate + H(+). In terms of biological role, alcohol acetyltransferase that catalyzes the synthesis of ethyl acetate from ethanol and acetyl-CoA. Can also function as a thioesterase by hydrolyzing acetyl-CoA in the absence of ethanol, as well as esterase hydrolyzing ethyl acetate. The polypeptide is Ethanol acetyltransferase 1 (EAT1) (Kluyveromyces marxianus (strain DMKU3-1042 / BCC 29191 / NBRC 104275) (Yeast)).